The primary structure comprises 712 residues: Elongation factor G (712 aa).

One can recognise a tr-type G domain in the interval 8-290 (TRYRNIGISA…AVIEFLPSPT (283 aa)). Residues 17–24 (AHIDAGKT), 88–92 (DTPGH), and 142–145 (NKMD) each bind GTP.

It belongs to the TRAFAC class translation factor GTPase superfamily. Classic translation factor GTPase family. EF-G/EF-2 subfamily.

The protein localises to the cytoplasm. Catalyzes the GTP-dependent ribosomal translocation step during translation elongation. During this step, the ribosome changes from the pre-translocational (PRE) to the post-translocational (POST) state as the newly formed A-site-bound peptidyl-tRNA and P-site-bound deacylated tRNA move to the P and E sites, respectively. Catalyzes the coordinated movement of the two tRNA molecules, the mRNA and conformational changes in the ribosome. The chain is Elongation factor G from Acinetobacter baumannii (strain SDF).